Here is a 442-residue protein sequence, read N- to C-terminus: MREREPSLVYAFRQSTPYVNVHRGATFVLMMGGEAICHPNFANIVSDIALLQTLGIRLVLVFGSRPQNDEALARAGIEAQYHRRIRVTDDESFAIIKQVCGGLQYDITAQLSMGLANTPMQEARISVVSGNFVTAQPLGVDDGIDFCHSGRVRRIDVEGITRQLDQKGLVLISPIGCSVTGESFNLSSEEVARRVAVDLKADKLICFSSTQGVMDRHGEAISELFPEQAEELLVELEQAGEEMSGTARYLRAAIASCRGGVPRSHLVSYQDDGAMLQELFSRDGLGTQIVRESAEQARAATIEDIGGILDLIRPLEEDGILVRRSREQLEMEIDKFTIIERDGLIIGCAALYCFMEEAMAEMACVAIHPEYRNSNRGDQLVAKVAERAKRLGIRRLFVLTTRSIHWFRERGFDPLEVEDLPVERQRLYNWQRRSKVLSKTIS.

Residues 295–442 (EQARAATIED…RSKVLSKTIS (148 aa)) form the N-acetyltransferase domain.

This sequence belongs to the acetyltransferase family. ArgA subfamily.

The protein resides in the cytoplasm. The enzyme catalyses L-glutamate + acetyl-CoA = N-acetyl-L-glutamate + CoA + H(+). It functions in the pathway amino-acid biosynthesis; L-arginine biosynthesis; N(2)-acetyl-L-ornithine from L-glutamate: step 1/4. The polypeptide is Amino-acid acetyltransferase (Aeromonas salmonicida (strain A449)).